We begin with the raw amino-acid sequence, 346 residues long: Dimethyladenosine transferase 1, mitochondrial (346 aa).

A mitochondrion-targeting transit peptide spans Met1–Leu27. S-adenosyl-L-methionine contacts are provided by Leu38, Gly63, Glu85, Lys86, Asp111, Val112, and Asn141.

Belongs to the class I-like SAM-binding methyltransferase superfamily. rRNA adenine N(6)-methyltransferase family. KsgA subfamily. Interacts with mitochondrial RNA polymerase POLRMT. Interacts with TFAM. Bound to the maturing mtSSU until the late stages of assembly. Ubiquitously expressed.

It is found in the mitochondrion. The catalysed reaction is adenosine(N)/adenosine(N+1) in rRNA + 4 S-adenosyl-L-methionine = N(6)-dimethyladenosine(N)/N(6)-dimethyladenosine(N+1) in rRNA + 4 S-adenosyl-L-homocysteine + 4 H(+). Functionally, mitochondrial methyltransferase which uses S-adenosyl methionine to dimethylate two highly conserved adjacent adenosine residues (A1583 and A1584) within the loop of helix 45 at the 3-prime end of 12S rRNA, thereby regulating the assembly or stability of the small subunit of the mitochondrial ribosome. Also required for basal transcription of mitochondrial DNA, probably via its interaction with POLRMT and TFAM. Stimulates transcription independently of the methyltransferase activity. This Homo sapiens (Human) protein is Dimethyladenosine transferase 1, mitochondrial.